A 246-amino-acid polypeptide reads, in one-letter code: 14-3-3 protein beta/alpha (246 aa).

Methionine 1 is subject to N-acetylmethionine; in 14-3-3 protein beta/alpha; alternate. N-acetylmethionine is present on methionine 1. N-acetylthreonine; in 14-3-3 protein beta/alpha, N-terminally processed is present on threonine 2. Threonine 2 is modified (phosphothreonine). Lysine 5 is modified (N6-acetyllysine). Lysine 51 is subject to N6-acetyllysine; alternate. A Glycyl lysine isopeptide (Lys-Gly) (interchain with G-Cter in SUMO2); alternate cross-link involves residue lysine 51. A Phosphoserine modification is found at serine 60. The residue at position 70 (lysine 70) is an N6-acetyllysine. A 3'-nitrotyrosine mark is found at tyrosine 84 and tyrosine 106. An N6-acetyllysine modification is found at lysine 117. Residues serine 186 and serine 232 each carry the phosphoserine modification.

This sequence belongs to the 14-3-3 family. In terms of assembly, homodimer. Interacts with SAMSN1 and PRKCE. Interacts with AKAP13. Interacts with SSH1 and TORC2/CRTC2. Interacts with ABL1; the interaction results in cytoplasmic location of ABL1 and inhibition of cABL-mediated apoptosis. Interacts with ROR2 (dimer); the interaction results in phosphorylation of YWHAB on tyrosine residues. Interacts with GAB2. Interacts with YAP1 (phosphorylated form). Interacts with the phosphorylated (by AKT1) form of SRPK2. Interacts with PKA-phosphorylated AANAT. Interacts with MYO1C. Interacts with SIRT2. Interacts with the 'Thr-369' phosphorylated form of DAPK2. Interacts with PI4KB, TBC1D22A and TBC1D22B. Interacts with the 'Ser-1134' and 'Ser-1161' phosphorylated form of SOS1. Interacts (via phosphorylated form) with YWHAB; this interaction occurs in a protein kinase AKT1-dependent manner. Interacts with SLITRK1. Interacts with SYNPO2 (phosphorylated form); YWHAB competes with ACTN2 for interaction with SYNPO2. Interacts with RIPOR2 (via phosphorylated form) isoform 2; this interaction occurs in a chemokine-dependent manner and does not compete for binding of RIPOR2 with RHOA nor blocks inhibition of RIPOR2-mediated RHOA activity. Interacts with MARK2 and MARK3. Interacts with TESK1; the interaction is dependent on the phosphorylation of TESK1 'Ser-437' and inhibits TESK1 kinase activity. Interacts with MEFV. Interacts with HDAC4. Interacts with ADAM22 (via C-terminus). (Microbial infection) Interacts with herpes simplex virus 1 protein UL46. As to quaternary structure, (Microbial infection) Probably interacts with Chlamydia trachomatis protein IncG. Post-translationally, the alpha, brain-specific form differs from the beta form in being phosphorylated. Phosphorylated on Ser-60 by protein kinase C delta type catalytic subunit in a sphingosine-dependent fashion.

The protein resides in the cytoplasm. It is found in the melanosome. The protein localises to the vacuole membrane. Adapter protein implicated in the regulation of a large spectrum of both general and specialized signaling pathways. Binds to a large number of partners, usually by recognition of a phosphoserine or phosphothreonine motif. Binding generally results in the modulation of the activity of the binding partner. Negative regulator of osteogenesis. Blocks the nuclear translocation of the phosphorylated form (by AKT1) of SRPK2 and antagonizes its stimulatory effect on cyclin D1 expression resulting in blockage of neuronal apoptosis elicited by SRPK2. Negative regulator of signaling cascades that mediate activation of MAP kinases via AKAP13. The sequence is that of 14-3-3 protein beta/alpha (YWHAB) from Homo sapiens (Human).